Here is a 326-residue protein sequence, read N- to C-terminus: Eukaryotic translation initiation factor 2 subunit 1 (326 aa).

The 72-residue stretch at 24 to 95 (DDLIMVKVNR…QKGYIDLSKR (72 aa)) folds into the S1 motif domain. S59 carries the post-translational modification Phosphoserine; by eIK1, eIK2 and PK4. The disordered stretch occupies residues 291-326 (LDKHDGLSSDDEYSSDGDEDDSSNDDDNSSDEDDDD). Residues 298–326 (SSDDEYSSDGDEDDSSNDDDNSSDEDDDD) show a composition bias toward acidic residues.

The protein belongs to the eIF-2-alpha family. Post-translationally, phosphorylates at Ser-59 in mature trophozoites, schizonts and gametocytes but not in rings and young trophozoites. Phosphorylates at Ser-59 by eIK2 in salivary gland sporozoites but not in midgut and hemocoel sporozoites. Dephosphorylated at Ser-59 by UIS2. Phosphorylation of eIF2alpha subunit of the pre-initiation complex eIF2 inhibits recycling of inactive eIF2-GDP to active eIF2-GTP by limiting the activity of the guanine nucleotide exchange factor eIF2B and thus, inhibits protein translation.

The protein localises to the cytoplasm. It localises to the stress granule. Functionally, functions in the early steps of protein synthesis by forming a ternary complex with GTP and initiator tRNA. May regulate protein translation in response to amino acid starvation. May regulate protein at various stages of parasite development. The sequence is that of Eukaryotic translation initiation factor 2 subunit 1 from Plasmodium berghei (strain Anka).